The primary structure comprises 217 residues: Uracil-DNA glycosylase (217 aa).

Residue Asp62 is the Proton acceptor of the active site.

It belongs to the uracil-DNA glycosylase (UDG) superfamily. UNG family.

The protein resides in the cytoplasm. It catalyses the reaction Hydrolyzes single-stranded DNA or mismatched double-stranded DNA and polynucleotides, releasing free uracil.. In terms of biological role, excises uracil residues from the DNA which can arise as a result of misincorporation of dUMP residues by DNA polymerase or due to deamination of cytosine. The protein is Uracil-DNA glycosylase of Streptococcus uberis (strain ATCC BAA-854 / 0140J).